The following is a 265-amino-acid chain: Hydroxyethylthiazole kinase (265 aa).

Met55 contributes to the substrate binding site. Residues Arg130 and Ser176 each coordinate ATP. Gly203 lines the substrate pocket.

Belongs to the Thz kinase family. The cofactor is Mg(2+).

It carries out the reaction 5-(2-hydroxyethyl)-4-methylthiazole + ATP = 4-methyl-5-(2-phosphooxyethyl)-thiazole + ADP + H(+). The protein operates within cofactor biosynthesis; thiamine diphosphate biosynthesis; 4-methyl-5-(2-phosphoethyl)-thiazole from 5-(2-hydroxyethyl)-4-methylthiazole: step 1/1. Functionally, catalyzes the phosphorylation of the hydroxyl group of 4-methyl-5-beta-hydroxyethylthiazole (THZ). This chain is Hydroxyethylthiazole kinase, found in Leptospira interrogans serogroup Icterohaemorrhagiae serovar Lai (strain 56601).